We begin with the raw amino-acid sequence, 328 residues long: NADH-quinone oxidoreductase subunit H (328 aa).

8 helical membrane-spanning segments follow: residues 8–28, 81–101, 114–134, 154–174, 186–206, 237–257, 265–285, and 304–324; these read VAAI…AVGA, GLFV…FMVI, IGLL…LFAG, LSYE…AGSF, LWFI…GIAV, FFVG…TLFL, LPPI…FILL, and VCLP…LIFS.

It belongs to the complex I subunit 1 family. As to quaternary structure, NDH-1 is composed of 14 different subunits. Subunits NuoA, H, J, K, L, M, N constitute the membrane sector of the complex.

It is found in the cell inner membrane. The catalysed reaction is a quinone + NADH + 5 H(+)(in) = a quinol + NAD(+) + 4 H(+)(out). In terms of biological role, NDH-1 shuttles electrons from NADH, via FMN and iron-sulfur (Fe-S) centers, to quinones in the respiratory chain. The immediate electron acceptor for the enzyme in this species is believed to be ubiquinone. Couples the redox reaction to proton translocation (for every two electrons transferred, four hydrogen ions are translocated across the cytoplasmic membrane), and thus conserves the redox energy in a proton gradient. This subunit may bind ubiquinone. The protein is NADH-quinone oxidoreductase subunit H of Chromohalobacter salexigens (strain ATCC BAA-138 / DSM 3043 / CIP 106854 / NCIMB 13768 / 1H11).